Consider the following 279-residue polypeptide: MGVRGFFAITRPANSVVAGLAAIVAYLIATGTLVYGVLLLMAVVLLVTAAGNVINDYFDAAIDTINRPDRPIPSGAVSRNAALAWAFSLFLLGLAVSVFTTPLCMGIALVNALLLVLYAARLKSTPFFGNAAVAFLSASIFLFGGAYAGWHALLDMLPIAAITFLAMLARELLKDAEDIEGDRAHGADTLAIRIGVRKTALIAFACTAFAIAASAVPYLWWGGWYLAGIAAVDLVILFAAGRSLGCTDPVSLKATGSTTLLKLGMFASLVVFTLSAVFL.

8 helical membrane-spanning segments follow: residues 5 to 25 (GFFA…AIVA), 27 to 47 (LIAT…VLLV), 90 to 110 (FLLG…IALV), 127 to 147 (FFGN…GGAY), 148 to 168 (AGWH…LAML), 198 to 218 (KTAL…AVPY), 219 to 239 (LWWG…ILFA), and 259 to 279 (TLLK…AVFL).

Belongs to the UbiA prenyltransferase family. DGGGP synthase subfamily. Requires Mg(2+) as cofactor.

The protein localises to the cell membrane. It catalyses the reaction sn-3-O-(geranylgeranyl)glycerol 1-phosphate + (2E,6E,10E)-geranylgeranyl diphosphate = 2,3-bis-O-(geranylgeranyl)-sn-glycerol 1-phosphate + diphosphate. The protein operates within membrane lipid metabolism; glycerophospholipid metabolism. Functionally, prenyltransferase that catalyzes the transfer of the geranylgeranyl moiety of geranylgeranyl diphosphate (GGPP) to the C2 hydroxyl of (S)-3-O-geranylgeranylglyceryl phosphate (GGGP). This reaction is the second ether-bond-formation step in the biosynthesis of archaeal membrane lipids. This chain is Digeranylgeranylglyceryl phosphate synthase, found in Methanoregula boonei (strain DSM 21154 / JCM 14090 / 6A8).